Consider the following 828-residue polypeptide: Auxin response factor 2B (828 aa).

A DNA-binding region (TF-B3) is located at residues 128–230 (FCKTLTASDT…ELRVGVRRAM (103 aa)). Disordered regions lie at residues 348-397 (PDRV…GSSK), 681-703 (EQFQ…HSTR), and 791-828 (NPGT…PEDS). The segment covering 360-370 (LSPPALNPLPI) has biased composition (pro residues). Residues 380 to 390 (VLPSSPDSSVL) show a composition bias toward polar residues. The 84-residue stretch at 703–786 (RSCTKVHKQG…RKIFIYTKDE (84 aa)) folds into the PB1 domain. Over residues 791–806 (NPGTLNSKGEDNSSVA) the composition is skewed to polar residues.

It belongs to the ARF family. Homodimers and heterodimers. In terms of tissue distribution, expressed in root, leaf and stem. Also expressed in flower and fruit. Expressed in flower buds about three days before opening including stamen, petal and sepal with the highest in ovary.

Its subcellular location is the nucleus. In terms of biological role, auxin response factors (ARFs) are transcriptional factors that binds specifically to the DNA sequence 5'-TGTCTC-3' found in the auxin-responsive promoter elements (AuxREs). Could act as transcriptional activator or repressor. Involved in the control of fruit ripening process. Regulates expression of a number of ripening regulators, transcription factors, and ethylene biosynthesis and signaling components. May act as a transcriptional repressor of auxin-responsive genes. This is Auxin response factor 2B from Solanum lycopersicum (Tomato).